The following is a 373-amino-acid chain: Spermidine/putrescine import ATP-binding protein PotA (373 aa).

The ABC transporter domain maps to 6–236 (LSLSNLTKQF…PANLFTARFV (231 aa)). 38–45 (GPSGCGKT) is an ATP binding site.

This sequence belongs to the ABC transporter superfamily. Spermidine/putrescine importer (TC 3.A.1.11.1) family. As to quaternary structure, the complex is composed of two ATP-binding proteins (PotA), two transmembrane proteins (PotB and PotC) and a solute-binding protein (PotD).

It localises to the cell inner membrane. The catalysed reaction is ATP + H2O + polyamine-[polyamine-binding protein]Side 1 = ADP + phosphate + polyamineSide 2 + [polyamine-binding protein]Side 1.. Its function is as follows. Part of the ABC transporter complex PotABCD involved in spermidine/putrescine import. Responsible for energy coupling to the transport system. The chain is Spermidine/putrescine import ATP-binding protein PotA from Marinobacter nauticus (strain ATCC 700491 / DSM 11845 / VT8) (Marinobacter aquaeolei).